The following is a 751-amino-acid chain: Dachshund homolog 1 (751 aa).

The disordered stretch occupies residues 1-178 (MAVPAALIPP…PSPVENTPQN (178 aa)). Composition is skewed to low complexity over residues 20–53 (ISTS…SGPT) and 61–74 (ASSA…TVTS). 2 stretches are compositionally biased toward gly residues: residues 75–97 (PGGG…GGGS) and 107–119 (SSGG…GGGA). The segment covering 120 to 156 (SSTPITASTGSSSSSSSSSSSSSSSSSSSSSSSSSSS) has biased composition (low complexity). The segment covering 167 to 178 (STPSPVENTPQN) has biased composition (polar residues). The tract at residues 182–268 (KMVDLRGAKV…LISRKDFETL (87 aa)) is DACHbox-N. Residues 182–377 (KMVDLRGAKV…VGSSGGSWDK (196 aa)) are interaction with SIX6 and HDAC3. Disordered stretches follow at residues 273–295 (TNAS…PENS), 351–393 (SNNQ…APVA), 467–525 (SPPS…RIPV), and 537–556 (MGLS…AGHD). Polar residues-rich tracts occupy residues 285 to 294 (RTQSVTSPEN) and 351 to 369 (SNNQ…SSVG). Serine 484 bears the Phosphoserine mark. A compositionally biased stretch (low complexity) spans 499–517 (SHPSSHRSSSVSSSPARTE). The tract at residues 609–689 (SSIETLLTNI…KAKRKLQEAL (81 aa)) is DACHbox-C. Residues 620–699 (GLLKVAIDNA…EFETKRREQA (80 aa)) are interaction with SIN3A. Positions 623-711 (KVAIDNARAQ…TLKQAASADS (89 aa)) form a coiled coil.

The protein belongs to the DACH/dachshund family. In terms of assembly, interacts with SIX1, SIX6 and EYA3. Interacts with NCOR1 and HDAC3 through its N-terminus. Interacts with SIN3A through its C-terminus. Interacts with SMAD3 and SMAD4. In terms of tissue distribution, expressed at higher levels in adult kidney and lung, and at lower levels in brain and testis. Expressed in embryonal kidneys, eyes, cochleae and limb buds.

The protein resides in the nucleus. In terms of biological role, transcription factor that is involved in regulation of organogenesis. Seems to be a regulator of SIX1, SIX6 and probably SIX5. Corepression of precursor cell proliferation in myoblasts by SIX1 is switched to coactivation through recruitment of EYA3 to the SIX1-DACH1 complex. Transcriptional activation also seems to involve association of CREBBP. Seems to act as a corepressor of SIX6 in regulating proliferation by directly repressing cyclin-dependent kinase inhibitors, including the p27Kip1 promoter. Inhibits TGF-beta signaling through interaction with SMAD4 and NCOR1. Binds to chromatin DNA via its DACHbox-N domain. This chain is Dachshund homolog 1 (Dach1), found in Mus musculus (Mouse).